The chain runs to 461 residues: UDP-glycosyltransferase 82A1 (461 aa).

UDP-alpha-D-glucose contacts are provided by residues Ser292, 349-351 (APQ), 366-374 (HCGWNSTME), and 388-391 (AGDQ).

Belongs to the UDP-glycosyltransferase family.

The chain is UDP-glycosyltransferase 82A1 (UGT82A1) from Arabidopsis thaliana (Mouse-ear cress).